Here is a 364-residue protein sequence, read N- to C-terminus: Doublecortin domain-containing protein 2C (364 aa).

2 Doublecortin domains span residues 16–98 and 136–217; these read KTIV…LDYI and RHIN…FPYW. Residues 233–255 form a disordered region; the sequence is VEKNSQRKKKVDSKGKEPCKYDG.

In terms of tissue distribution, expressed in testis and spermatozoa (at protein level).

The protein localises to the cell projection. It localises to the cilium. It is found in the flagellum. Its subcellular location is the cytoplasm. The protein is Doublecortin domain-containing protein 2C of Homo sapiens (Human).